The primary structure comprises 423 residues: Haloacid dehalogenase-like hydrolase domain-containing 5 (423 aa).

The signal sequence occupies residues 1-23 (MAAWGCVAALGAARGLCWRAARA).

This sequence belongs to the HAD-like hydrolase superfamily. Widely expressed.

The chain is Haloacid dehalogenase-like hydrolase domain-containing 5 from Homo sapiens (Human).